The chain runs to 313 residues: Ribosomal RNA small subunit methyltransferase H (313 aa).

S-adenosyl-L-methionine is bound by residues Gly35–Tyr37, Asp53, Phe80, Asp101, and Gln108.

This sequence belongs to the methyltransferase superfamily. RsmH family.

It localises to the cytoplasm. It catalyses the reaction cytidine(1402) in 16S rRNA + S-adenosyl-L-methionine = N(4)-methylcytidine(1402) in 16S rRNA + S-adenosyl-L-homocysteine + H(+). In terms of biological role, specifically methylates the N4 position of cytidine in position 1402 (C1402) of 16S rRNA. The polypeptide is Ribosomal RNA small subunit methyltransferase H (Acidiphilium cryptum (strain JF-5)).